Reading from the N-terminus, the 214-residue chain is Thiamine pyrophosphokinase (214 aa).

It belongs to the thiamine pyrophosphokinase family.

The catalysed reaction is thiamine + ATP = thiamine diphosphate + AMP + H(+). It functions in the pathway cofactor biosynthesis; thiamine diphosphate biosynthesis; thiamine diphosphate from thiamine: step 1/1. In terms of biological role, catalyzes the ATP-dependent phosphorylation of thiamine to thiamine pyrophosphate. Is involved in thiamine salvage. This chain is Thiamine pyrophosphokinase, found in Bacillus subtilis (strain 168).